A 248-amino-acid polypeptide reads, in one-letter code: MPTYKAVIAYDGSVFSGFALQKDKRLKSVLGTLKEGFARVGIKSDIIGAGRTDKGVHATGQVICFQSAHFLDSQVQAIESLRFLLNAKLYPHIMVRSLHIVDDTFHPRFDALWRSYRFLLSPTQPSPFAAPYVSYEKIGDETLFKNALQAFQGQHNFVFFKKNGSYTKNCIRTIFAIKHYTYKGLDIVYVRGNGFLRAQVRLMVGAALAYSRAELSFHSLQEQINGQKQHYTYPISPNGLYLCEVGYR.

Residue D53 is the Nucleophile of the active site. Y116 is a substrate binding site.

This sequence belongs to the tRNA pseudouridine synthase TruA family. Homodimer.

It catalyses the reaction uridine(38/39/40) in tRNA = pseudouridine(38/39/40) in tRNA. Functionally, formation of pseudouridine at positions 38, 39 and 40 in the anticodon stem and loop of transfer RNAs. This Helicobacter hepaticus (strain ATCC 51449 / 3B1) protein is tRNA pseudouridine synthase A.